Here is a 181-residue protein sequence, read N- to C-terminus: D-lyxose/D-mannose isomerase (181 aa).

Residues H75, H77, E88, and H143 each coordinate Mn(2+).

It belongs to the D-lyxose ketol-isomerase family. Homodimer. The cofactor is Mn(2+).

It catalyses the reaction D-lyxose = D-xylulose. It carries out the reaction D-mannose = D-fructose. Sugar isomerase that catalyzes the reversible isomerization of D-lyxose to D-xylulose, and D-mannose to D-fructose. Shows optimum activity using D-lyxose as substrate, but can also effectively catalyze the isomerization between D-fructose and D-mannose. The sequence is that of D-lyxose/D-mannose isomerase from Thermosediminibacter oceani (strain ATCC BAA-1034 / DSM 16646 / JW/IW-1228P).